A 498-amino-acid polypeptide reads, in one-letter code: GTPase Der (498 aa).

EngA-type G domains lie at 3–167 (PVVA…FDDL) and 210–383 (IKLA…KSAT). GTP-binding positions include 9 to 16 (GRPNVGKS), 57 to 61 (DTGGI), 119 to 122 (NKID), 216 to 223 (GRPNVGKS), 263 to 267 (DTAGV), and 328 to 331 (NKWD). In terms of domain architecture, KH-like spans 384–468 (TRVGTSVLTR…PIRINFQNSD (85 aa)).

The protein belongs to the TRAFAC class TrmE-Era-EngA-EngB-Septin-like GTPase superfamily. EngA (Der) GTPase family. Associates with the 50S ribosomal subunit.

GTPase that plays an essential role in the late steps of ribosome biogenesis. This is GTPase Der from Vibrio campbellii (strain ATCC BAA-1116).